Here is a 481-residue protein sequence, read N- to C-terminus: F-box protein At1g49360 (481 aa).

The F-box domain occupies 105 to 156 (LKEDLFLPSDLVRLILSRLSFKDNIRSSTVCKAWGDIAASVRVKSRRCWLLY).

The polypeptide is F-box protein At1g49360 (Arabidopsis thaliana (Mouse-ear cress)).